Consider the following 473-residue polypeptide: PTS system trehalose-specific EIIBC component (473 aa).

Residues 1 to 89 (MMSKINQTDI…IASTGQAQVD (89 aa)) form the PTS EIIB type-1 domain. Topologically, residues 1–110 (MMSKINQTDI…MKWHEQLISH (110 aa)) are cytoplasmic. Catalysis depends on cysteine 29, which acts as the Phosphocysteine intermediate; for EIIB activity. At cysteine 29 the chain carries Phosphocysteine; by EIIA. In terms of domain architecture, PTS EIIC type-1 spans 109–473 (SHFAVIFFPL…KYRLGTLDIV (365 aa)). A helical transmembrane segment spans residues 111-131 (FAVIFFPLLPALISGGLILGF). Residues 132-158 (RNVIGDLPMSNGQTLAQMYPSLQTIYD) lie on the Periplasmic side of the membrane. Residues 159–179 (FLWLIGEAIFFYLPVGICWSA) traverse the membrane as a helical segment. Over 180–187 (VKKMGGTP) the chain is Cytoplasmic. The helical transmembrane segment at 188 to 208 (ILGIVLGVTLVSPQLMNAYLL) threads the bilayer. Residues 209-225 (GQQLPEVWDFGMFSIAK) are Periplasmic-facing. A helical membrane pass occupies residues 226–246 (VGYQAQVIPALLAGLALGVIE). At 247-258 (TRLKRIVPDYLY) the chain is on the cytoplasmic side. A helical membrane pass occupies residues 259-279 (LVVVPVCSLILAVFLAHALIG). Over 280 to 300 (PFGRMIGDGVAFAVRHLMTGS) the chain is Periplasmic. Residues 301 to 321 (FAPIGAALFGFLYAPLVITGV) form a helical membrane-spanning segment. The Cytoplasmic portion of the chain corresponds to 322 to 340 (HQTTLAIDLQMIQSMGGTP). Residues 341–361 (VWPLIALSNIAQGSAVIGIII) traverse the membrane as a helical segment. Topologically, residues 362–370 (SSRKHNERE) are periplasmic. A helical transmembrane segment spans residues 371–391 (ISVPAAISAWLGVTEPAMYGI). Residues 392-398 (NLKYRFP) are Cytoplasmic-facing. The chain crosses the membrane as a helical span at residues 399 to 419 (MLCAMIGSGLAGLLCGLNGVM). Over 420–440 (ANGIGVGGLPGILSIQPSYWQ) the chain is Periplasmic. Residues 441–461 (VFALAMAIAIIIPIVLTSFIY) traverse the membrane as a helical segment. Residues 462-473 (QRKYRLGTLDIV) lie on the Cytoplasmic side of the membrane.

The protein resides in the cell inner membrane. It catalyses the reaction alpha,alpha-trehalose(out) + N(pros)-phospho-L-histidyl-[protein] = alpha,alpha-trehalose 6-phosphate(in) + L-histidyl-[protein]. Its function is as follows. The phosphoenolpyruvate-dependent sugar phosphotransferase system (sugar PTS), a major carbohydrate active transport system, catalyzes the phosphorylation of incoming sugar substrates concomitantly with their translocation across the cell membrane. This system is involved in trehalose transport at low osmolarity. The sequence is that of PTS system trehalose-specific EIIBC component (treB) from Escherichia coli (strain K12).